A 68-amino-acid polypeptide reads, in one-letter code: Large ribosomal subunit protein bL35 (68 aa).

Belongs to the bacterial ribosomal protein bL35 family.

This is Large ribosomal subunit protein bL35 from Rickettsia akari (strain Hartford).